Here is a 258-residue protein sequence, read N- to C-terminus: RIO-type serine/threonine-protein kinase Rio1 (258 aa).

One can recognise a Protein kinase domain in the interval 49-258 (TAMGGVISTG…EEMLKEVKGE (210 aa)). Residues 55 to 63 (ISTGKEANV) and K80 each bind ATP. Phosphoserine; by autocatalysis is present on S108. E148 and I150 together coordinate ATP. D196 functions as the Proton acceptor in the catalytic mechanism. ATP-binding residues include Y200, N201, and D212. Positions 201 and 212 each coordinate Mg(2+). D212 functions as the 4-aspartylphosphate intermediate in the catalytic mechanism.

The protein belongs to the protein kinase superfamily. RIO-type Ser/Thr kinase family. The cofactor is Mg(2+).

The catalysed reaction is L-seryl-[protein] + ATP = O-phospho-L-seryl-[protein] + ADP + H(+). The enzyme catalyses L-threonyl-[protein] + ATP = O-phospho-L-threonyl-[protein] + ADP + H(+). Functionally, autophosphorylation of the rio1 protein is not necessary for maintenance of kinase activity. Prefers ATP over GTP. The yeast ortholog is involved in ribosome biogenesis. Despite the protein kinase domain is proposed to act predominantly as an ATPase. The polypeptide is RIO-type serine/threonine-protein kinase Rio1 (rio1) (Archaeoglobus fulgidus (strain ATCC 49558 / DSM 4304 / JCM 9628 / NBRC 100126 / VC-16)).